The sequence spans 213 residues: Peroxiredoxin-5, mitochondrial (213 aa).

A mitochondrion-targeting transit peptide spans 1-51 (MVQLRFCVLGSIAGSVLRASATWTCVAGRAGRKGAGWECGGARSFSSAAVT). A Thioredoxin domain is found at 55-213 (IKVGDTIPSV…SLAPNILSQL (159 aa)). At Lys74 the chain carries N6-acetyllysine. N6-acetyllysine; alternate is present on Lys82. Lys82 bears the N6-succinyllysine; alternate mark. The active-site Cysteine sulfenic acid (-SOH) intermediate is the Cys99. Cys99 carries S-palmitoyl cysteine lipidation. A disulfide bridge connects residues Cys99 and Cys203. Position 115 is an N6-succinyllysine (Lys115). 2 positions are modified to phosphoserine: Ser170 and Ser181. A Microbody targeting signal motif is present at residues 211 to 213 (SQL).

Belongs to the peroxiredoxin family. Prx5 subfamily. In terms of assembly, monomer. S-palmitoylated. Palmitoylation occurs on the active site, inhibiting its reactivity; therefore PRDX5 palmitoylation status determines its antioxidant capacity. In terms of processing, S-palmitoylated. Depalmitoylated by ABHD10.

Its subcellular location is the mitochondrion. It is found in the cytoplasm. The protein localises to the peroxisome matrix. It catalyses the reaction a hydroperoxide + [thioredoxin]-dithiol = an alcohol + [thioredoxin]-disulfide + H2O. Thiol-specific peroxidase that catalyzes the reduction of hydrogen peroxide and organic hydroperoxides to water and alcohols, respectively. Plays a role in cell protection against oxidative stress by detoxifying peroxides and as sensor of hydrogen peroxide-mediated signaling events. The sequence is that of Peroxiredoxin-5, mitochondrial from Rattus norvegicus (Rat).